Reading from the N-terminus, the 164-residue chain is ATP synthase subunit b 1 (164 aa).

Residues 4-24 (MELAELWVAVAFFVFVGILLY) traverse the membrane as a helical segment.

The protein belongs to the ATPase B chain family. As to quaternary structure, F-type ATPases have 2 components, F(1) - the catalytic core - and F(0) - the membrane proton channel. F(1) has five subunits: alpha(3), beta(3), gamma(1), delta(1), epsilon(1). F(0) has three main subunits: a(1), b(2) and c(10-14). The alpha and beta chains form an alternating ring which encloses part of the gamma chain. F(1) is attached to F(0) by a central stalk formed by the gamma and epsilon chains, while a peripheral stalk is formed by the delta and b chains.

It localises to the cell inner membrane. Its function is as follows. F(1)F(0) ATP synthase produces ATP from ADP in the presence of a proton or sodium gradient. F-type ATPases consist of two structural domains, F(1) containing the extramembraneous catalytic core and F(0) containing the membrane proton channel, linked together by a central stalk and a peripheral stalk. During catalysis, ATP synthesis in the catalytic domain of F(1) is coupled via a rotary mechanism of the central stalk subunits to proton translocation. Functionally, component of the F(0) channel, it forms part of the peripheral stalk, linking F(1) to F(0). In Azorhizobium caulinodans (strain ATCC 43989 / DSM 5975 / JCM 20966 / LMG 6465 / NBRC 14845 / NCIMB 13405 / ORS 571), this protein is ATP synthase subunit b 1.